Reading from the N-terminus, the 437-residue chain is MAAPRRYCAGLVRALLGARQVGSHAGREWLAPPGCLLGNQARCVSCVVGSTFSGPLLASASSRYGQDSALDRILGFSQPDSSLVPSVPAVSVHRDEQNLLLVHTPDMPENPRVLRVVLLGAPNAGKSTLSNQLLGRKVFPVSKKVHTTRCQALGVITEKETQVILLDTPGIISPVKQKRHHLERSLLEDPWTSMESADLVVVLVDVSDKWTRSRLNPQVLQCLTKFSQVPSILVLNKVDCLKQKSVLLELTAALTEGVVNGKKLNIKQALRSRSSTHCPGPETEGPNAHSVRNPQRIGWPYFQEIFMLSALNNKDVNTLKQYLLTQAQPGPWEFHSGVLTSQTPEEICANKIREKLLEYLPEEVPYGVQQKTVIWEEGPSGELVIQQNLLVPKESHVRILIGQKGLLISQIAQEVGRDLMDIFHCDVLIRLSVKLLK.

The N-terminal 20 residues, 1–20, are a transit peptide targeting the mitochondrion; sequence MAAPRRYCAGLVRALLGARQ. The Era-type G domain maps to 112 to 330; sequence RVLRVVLLGA…QYLLTQAQPG (219 aa). The tract at residues 120 to 127 is G1; that stretch reads GAPNAGKS. 120–127 serves as a coordination point for GTP; sequence GAPNAGKS. The G2 stretch occupies residues 146 to 150; sequence HTTRC. The interval 167–170 is G3; that stretch reads DTPG. 167 to 171 contributes to the GTP binding site; sequence DTPGI. Ser173 carries the phosphoserine modification. Residue 236-239 participates in GTP binding; sequence NKVD. Residues 236 to 239 are G4; it reads NKVD. The interval 270–292 is disordered; sequence LRSRSSTHCPGPETEGPNAHSVR. Residues 308 to 310 are G5; the sequence is LSA. Residues 360-437 form the KH type-2 domain; it reads LPEEVPYGVQ…LIRLSVKLLK (78 aa).

The protein belongs to the TRAFAC class TrmE-Era-EngA-EngB-Septin-like GTPase superfamily. Era GTPase family.

The protein localises to the mitochondrion matrix. It localises to the mitochondrion inner membrane. Functionally, probable GTPase that plays a role in the mitochondrial ribosomal small subunit assembly. Specifically binds the 12S mitochondrial rRNA (12S mt-rRNA) to a 33 nucleotide section delineating the 3' terminal stem-loop region. May act as a chaperone that protects the 12S mt-rRNA on the 28S mitoribosomal subunit during ribosomal small subunit assembly. This chain is GTPase Era, mitochondrial (Eral1), found in Mus musculus (Mouse).